Reading from the N-terminus, the 158-residue chain is Phosphopantetheine adenylyltransferase (158 aa).

A substrate-binding site is contributed by threonine 10. ATP-binding positions include 10-11 (TF) and histidine 18. Residues lysine 42, leucine 74, and arginine 88 each contribute to the substrate site. Residues 89–91 (GIR), glutamate 99, and 124–130 (WRYLSST) each bind ATP.

The protein belongs to the bacterial CoaD family. In terms of assembly, homohexamer. Mg(2+) is required as a cofactor.

Its subcellular location is the cytoplasm. It carries out the reaction (R)-4'-phosphopantetheine + ATP + H(+) = 3'-dephospho-CoA + diphosphate. It participates in cofactor biosynthesis; coenzyme A biosynthesis; CoA from (R)-pantothenate: step 4/5. In terms of biological role, reversibly transfers an adenylyl group from ATP to 4'-phosphopantetheine, yielding dephospho-CoA (dPCoA) and pyrophosphate. The sequence is that of Phosphopantetheine adenylyltransferase from Actinobacillus pleuropneumoniae serotype 7 (strain AP76).